Here is a 200-residue protein sequence, read N- to C-terminus: Pyridoxal 5'-phosphate synthase subunit PdxT (200 aa).

Position 52-54 (52-54) interacts with L-glutamine; sequence GES. The active-site Nucleophile is the cysteine 84. L-glutamine contacts are provided by residues arginine 116 and 145–146; that span reads IR. Active-site charge relay system residues include histidine 181 and glutamate 183.

The protein belongs to the glutaminase PdxT/SNO family. As to quaternary structure, in the presence of PdxS, forms a dodecamer of heterodimers. Only shows activity in the heterodimer.

It catalyses the reaction aldehydo-D-ribose 5-phosphate + D-glyceraldehyde 3-phosphate + L-glutamine = pyridoxal 5'-phosphate + L-glutamate + phosphate + 3 H2O + H(+). The enzyme catalyses L-glutamine + H2O = L-glutamate + NH4(+). Its pathway is cofactor biosynthesis; pyridoxal 5'-phosphate biosynthesis. Functionally, catalyzes the hydrolysis of glutamine to glutamate and ammonia as part of the biosynthesis of pyridoxal 5'-phosphate. The resulting ammonia molecule is channeled to the active site of PdxS. The polypeptide is Pyridoxal 5'-phosphate synthase subunit PdxT (Saccharolobus solfataricus (strain ATCC 35092 / DSM 1617 / JCM 11322 / P2) (Sulfolobus solfataricus)).